An 832-amino-acid polypeptide reads, in one-letter code: Cytosolic carboxypeptidase-like protein 5 (832 aa).

The interval 27-50 is disordered; that stretch reads TVPSDGEGVGGAATAPTSGSASSP. Positions 38–50 are enriched in low complexity; sequence AATAPTSGSASSP. Residues 157 to 571 form the Peptidase M14 domain; sequence YPFSYSDCQD…ALAIAALDMA (415 aa). The Zn(2+) site is built by His-252 and Glu-255. Residues 343 to 354 show a composition bias toward low complexity; the sequence is NSKNPSNQQPSS. Disordered stretches follow at residues 343 to 362 and 376 to 402; these read NSKN…PEVP and LHLG…KTDP. The span at 384 to 401 shows a compositional bias: basic and acidic residues; it reads GENHDRWTETEPTEEKTD. His-435 contributes to the Zn(2+) binding site. Glu-517 serves as the catalytic Proton donor/acceptor. The disordered stretch occupies residues 606–752; it reads STANVGLNKK…ASPTSSRNMG (147 aa). Positions 621 to 636 are enriched in polar residues; the sequence is PPKSNNGLPVSCSENA. Over residues 644–654 the composition is skewed to low complexity; sequence STGTSTGGSSS. Positions 655–666 are enriched in polar residues; it reads QQNSPQMKNSPS. The span at 708-752 shows a compositional bias: low complexity; it reads QQQQQQQQQQQQQQQQPLNQRSTTSSLAPSPTLASASPTSSRNMG.

This sequence belongs to the peptidase M14 family. Zn(2+) is required as a cofactor.

The protein resides in the cytoplasm. It localises to the cytosol. It is found in the nucleus. The protein localises to the cytoskeleton. Its subcellular location is the spindle. The protein resides in the midbody. The catalysed reaction is gamma-L-glutamyl-L-glutamyl-[protein] + H2O = L-glutamyl-[protein] + L-glutamate. It catalyses the reaction (L-glutamyl)(n+1)-gamma-L-glutamyl-L-glutamyl-[protein] + H2O = (L-glutamyl)(n)-gamma-L-glutamyl-L-glutamyl-[protein] + L-glutamate. The enzyme catalyses C-terminal L-alpha-aminoacyl-L-glutamyl-[tubulin] + H2O = C-terminal L-alpha-aminoacyl-[tubulin] + L-glutamate. It carries out the reaction C-terminal L-alpha-aminoacyl-L-glutamyl-L-glutamyl-[tubulin] + H2O = C-terminal L-alpha-aminoacyl-L-glutamyl-[tubulin] + L-glutamate. In terms of biological role, metallocarboxypeptidase that mediates deglutamylation of tubulin and non-tubulin target proteins. Catalyzes the removal of polyglutamate side chains present on the gamma-carboxyl group of glutamate residues within the C-terminal tail of alpha- and beta-tubulin. Cleaves alpha- and gamma-linked polyglutamate tubulin side-chain, as well as the branching point glutamate. Also catalyzes the removal of alpha-linked glutamate residues from the carboxy-terminus of alpha-tubulin. Mediates deglutamylation of nucleotidyltransferase CGAS, leading to CGAS antiviral defense response activation. The chain is Cytosolic carboxypeptidase-like protein 5 (Agbl5) from Rattus norvegicus (Rat).